The sequence spans 157 residues: Tripartite terminase subunit 2 (157 aa).

Residues 1–69 (MSWAKQRVPF…DGEDGHALPD (69 aa)) are disordered. A compositionally biased stretch (acidic residues) spans 11 to 27 (LDDDDGEEENDVQDDVD).

The protein belongs to the herpesviridae TRM2 protein family. In terms of assembly, associates with TRM1 and TRM3 to form the tripartite terminase complex.

Its subcellular location is the host nucleus. Functionally, component of the molecular motor that translocates viral genomic DNA in empty capsid during DNA packaging. Forms a tripartite terminase complex together with TRM1 and TRM3 in the host cytoplasm. Once the complex reaches the host nucleus, it interacts with the capsid portal vertex. This portal forms a ring in which genomic DNA is translocated into the capsid. This is Tripartite terminase subunit 2 from Homo sapiens (Human).